Here is a 302-residue protein sequence, read N- to C-terminus: Probable proteasome inhibitor (302 aa).

N-acetylalanine is present on Ala-2. Disordered regions lie at residues 151 to 188 and 259 to 302; these read LDGK…QIHP and ARFD…SDFI. Over residues 259-269 the composition is skewed to pro residues; the sequence is ARFDPYGPPGV.

Belongs to the proteasome inhibitor PI31 family.

Its function is as follows. Could play an important role in control of proteasome function. Inhibits the hydrolysis of protein and peptide substrates by the 20S proteasome. This chain is Probable proteasome inhibitor, found in Arabidopsis thaliana (Mouse-ear cress).